Reading from the N-terminus, the 331-residue chain is Major outer membrane protein P.IB (331 aa).

A signal peptide spans 1-19 (MKKSLIALTLAALPVAAMA).

The protein belongs to the Gram-negative porin family. As to quaternary structure, homotrimer.

Its subcellular location is the cell outer membrane. In terms of biological role, serves as a slightly cation selective porin. The protein is Major outer membrane protein P.IB (porB) of Neisseria meningitidis serogroup B (strain ATCC BAA-335 / MC58).